A 216-amino-acid polypeptide reads, in one-letter code: Glycerol-3-phosphate acyltransferase 3 (216 aa).

Helical transmembrane passes span 6–26 (LLLV…YLVS), 58–78 (LVAA…GLVI), 92–112 (ILFA…WPVF), 125–145 (FGGM…VLII), and 158–178 (ITGV…SGFP).

The protein belongs to the PlsY family. As to quaternary structure, probably interacts with PlsX.

It is found in the cell membrane. It carries out the reaction an acyl phosphate + sn-glycerol 3-phosphate = a 1-acyl-sn-glycero-3-phosphate + phosphate. It functions in the pathway lipid metabolism; phospholipid metabolism. In terms of biological role, catalyzes the transfer of an acyl group from acyl-phosphate (acyl-PO(4)) to glycerol-3-phosphate (G3P) to form lysophosphatidic acid (LPA). This enzyme utilizes acyl-phosphate as fatty acyl donor, but not acyl-CoA or acyl-ACP. The protein is Glycerol-3-phosphate acyltransferase 3 of Dehalococcoides mccartyi (strain ATCC BAA-2266 / KCTC 15142 / 195) (Dehalococcoides ethenogenes (strain 195)).